Consider the following 88-residue polypeptide: Small ribosomal subunit protein bS21 (88 aa).

The disordered stretch occupies residues A58–R88. A compositionally biased stretch (low complexity) spans R73–R88.

This sequence belongs to the bacterial ribosomal protein bS21 family.

The protein is Small ribosomal subunit protein bS21 of Mesorhizobium japonicum (strain LMG 29417 / CECT 9101 / MAFF 303099) (Mesorhizobium loti (strain MAFF 303099)).